A 329-amino-acid chain; its full sequence is Isopenicillin N synthase (329 aa).

Isopenicillin N is bound by residues Arg-87, Tyr-91, Ser-183, and Tyr-189. N-[(5S)-5-amino-5-carboxypentanoyl]-L-cysteinyl-D-valine-binding residues include Arg-87, Tyr-91, Ser-183, Tyr-189, His-212, and Asp-214. Residues Thr-180–Ala-286 enclose the Fe2OG dioxygenase domain. Fe(2+) is bound by residues His-212, Asp-214, and His-268. Residue Arg-277 participates in 2-oxoglutarate binding. Ser-279 contributes to the isopenicillin N binding site. Ser-279 provides a ligand contact to N-[(5S)-5-amino-5-carboxypentanoyl]-L-cysteinyl-D-valine.

Belongs to the iron/ascorbate-dependent oxidoreductase family. The cofactor is Fe cation. L-ascorbate serves as cofactor.

The catalysed reaction is N-[(5S)-5-amino-5-carboxypentanoyl]-L-cysteinyl-D-valine + O2 = isopenicillin N + 2 H2O. It participates in antibiotic biosynthesis; penicillin G biosynthesis; penicillin G from L-alpha-aminoadipate and L-cysteine and L-valine: step 2/3. Its function is as follows. Removes, in the presence of oxygen, 4 hydrogen atoms from delta-L-(alpha-aminoadipyl)-L-cysteinyl-D-valine (ACV) to form the azetidinone and thiazolidine rings of isopenicillin. The chain is Isopenicillin N synthase (pcbC) from Streptomyces jumonjinensis.